Consider the following 544-residue polypeptide: Coiled-coil domain-containing protein 82 (544 aa).

The segment covering 1-14 has biased composition (basic residues); that stretch reads MIHVRRHETRRNSK. The disordered stretch occupies residues 1–294; that stretch reads MIHVRRHETR…ESDEDGDDYI (294 aa). The span at 16–27 shows a compositional bias: basic and acidic residues; sequence HVPEQKSRVDWR. Over residues 39 to 67 the composition is skewed to acidic residues; it reads DSDEELDSEEFDSDEELDSDESFENDEEL. A phosphoserine mark is found at serine 88, serine 131, serine 154, serine 195, and serine 219. Polar residues predominate over residues 88 to 108; that stretch reads SKIQSEGNDSKCLINSGNGST. A compositionally biased stretch (basic and acidic residues) spans 112 to 132; that stretch reads ETNKIKHRNIDLQDQEKHLSQ. Over residues 223–248 the composition is skewed to basic and acidic residues; that stretch reads MEQKTPEKTLAAQKREKLQKLKELSK. Threonine 227 bears the Phosphothreonine mark. Positions 229-256 form a coiled coil; it reads EKTLAAQKREKLQKLKELSKQRSRQRRS. Acidic residues predominate over residues 273-294; it reads DEVDEEEEEDNYESDEDGDDYI. Serine 329 is subject to Phosphoserine.

In Homo sapiens (Human), this protein is Coiled-coil domain-containing protein 82 (CCDC82).